A 198-amino-acid polypeptide reads, in one-letter code: ATP-dependent Clp protease proteolytic subunit (198 aa).

The active-site Nucleophile is Ser103. His128 is an active-site residue.

The protein belongs to the peptidase S14 family. In terms of assembly, fourteen ClpP subunits assemble into 2 heptameric rings which stack back to back to give a disk-like structure with a central cavity, resembling the structure of eukaryotic proteasomes.

It is found in the cytoplasm. The catalysed reaction is Hydrolysis of proteins to small peptides in the presence of ATP and magnesium. alpha-casein is the usual test substrate. In the absence of ATP, only oligopeptides shorter than five residues are hydrolyzed (such as succinyl-Leu-Tyr-|-NHMec, and Leu-Tyr-Leu-|-Tyr-Trp, in which cleavage of the -Tyr-|-Leu- and -Tyr-|-Trp bonds also occurs).. Cleaves peptides in various proteins in a process that requires ATP hydrolysis. Has a chymotrypsin-like activity. Plays a major role in the degradation of misfolded proteins. The polypeptide is ATP-dependent Clp protease proteolytic subunit (Ruthia magnifica subsp. Calyptogena magnifica).